The primary structure comprises 62 residues: Short neurotoxin A (62 aa).

Residues 1–16 (RRCFNHPSSQPQTNKS) are compositionally biased toward polar residues. A disordered region spans residues 1-21 (RRCFNHPSSQPQTNKSCPPGE). 4 cysteine pairs are disulfide-bonded: Cys-3–Cys-24, Cys-17–Cys-41, Cys-43–Cys-54, and Cys-55–Cys-60.

The protein belongs to the three-finger toxin family. Short-chain subfamily. Type I alpha-neurotoxin sub-subfamily. Expressed by the venom gland.

The protein resides in the secreted. Its function is as follows. Binds to muscle nicotinic acetylcholine receptor (nAChR) and inhibit acetylcholine from binding to the receptor, thereby impairing neuromuscular transmission. In Laticauda crockeri (Crocker's sea snake), this protein is Short neurotoxin A.